A 323-amino-acid polypeptide reads, in one-letter code: Ferrochelatase (323 aa).

H196 and E277 together coordinate Fe cation.

This sequence belongs to the ferrochelatase family.

It is found in the cytoplasm. It catalyses the reaction heme b + 2 H(+) = protoporphyrin IX + Fe(2+). The protein operates within porphyrin-containing compound metabolism; protoheme biosynthesis; protoheme from protoporphyrin-IX: step 1/1. Functionally, catalyzes the ferrous insertion into protoporphyrin IX. This chain is Ferrochelatase, found in Haemophilus influenzae (strain 86-028NP).